We begin with the raw amino-acid sequence, 499 residues long: Glycerol kinase (499 aa).

Thr-13 is an ADP binding site. Thr-13, Thr-14, and Ser-15 together coordinate ATP. Thr-13 lines the sn-glycerol 3-phosphate pocket. Arg-17 provides a ligand contact to ADP. Residues Arg-83, Glu-84, Tyr-135, and Asp-244 each coordinate sn-glycerol 3-phosphate. Arg-83, Glu-84, Tyr-135, Asp-244, and Gln-245 together coordinate glycerol. ADP-binding residues include Thr-266 and Gly-310. The ATP site is built by Thr-266, Gly-310, Gln-314, and Gly-411. The ADP site is built by Gly-411 and Asn-415.

The protein belongs to the FGGY kinase family.

It catalyses the reaction glycerol + ATP = sn-glycerol 3-phosphate + ADP + H(+). Its pathway is polyol metabolism; glycerol degradation via glycerol kinase pathway; sn-glycerol 3-phosphate from glycerol: step 1/1. With respect to regulation, inhibited by fructose 1,6-bisphosphate (FBP). In terms of biological role, key enzyme in the regulation of glycerol uptake and metabolism. Catalyzes the phosphorylation of glycerol to yield sn-glycerol 3-phosphate. This chain is Glycerol kinase, found in Pseudothermotoga lettingae (strain ATCC BAA-301 / DSM 14385 / NBRC 107922 / TMO) (Thermotoga lettingae).